Reading from the N-terminus, the 67-residue chain is DNA-directed RNA polymerase subunit omega (67 aa).

Belongs to the RNA polymerase subunit omega family. As to quaternary structure, the RNAP catalytic core consists of 2 alpha, 1 beta, 1 beta' and 1 omega subunit. When a sigma factor is associated with the core the holoenzyme is formed, which can initiate transcription.

The catalysed reaction is RNA(n) + a ribonucleoside 5'-triphosphate = RNA(n+1) + diphosphate. In terms of biological role, promotes RNA polymerase assembly. Latches the N- and C-terminal regions of the beta' subunit thereby facilitating its interaction with the beta and alpha subunits. This Delftia acidovorans (strain DSM 14801 / SPH-1) protein is DNA-directed RNA polymerase subunit omega.